Reading from the N-terminus, the 366-residue chain is 3-dehydroquinate synthase (366 aa).

NAD(+) contacts are provided by residues 71–76 (DGEKYK), 105–109 (GVIGD), 129–130 (TT), lysine 142, lysine 151, and 169–172 (TLQT). Glutamate 184, histidine 247, and histidine 264 together coordinate Zn(2+).

Belongs to the sugar phosphate cyclases superfamily. Dehydroquinate synthase family. Co(2+) is required as a cofactor. Requires Zn(2+) as cofactor. The cofactor is NAD(+).

It is found in the cytoplasm. It catalyses the reaction 7-phospho-2-dehydro-3-deoxy-D-arabino-heptonate = 3-dehydroquinate + phosphate. Its pathway is metabolic intermediate biosynthesis; chorismate biosynthesis; chorismate from D-erythrose 4-phosphate and phosphoenolpyruvate: step 2/7. Catalyzes the conversion of 3-deoxy-D-arabino-heptulosonate 7-phosphate (DAHP) to dehydroquinate (DHQ). The protein is 3-dehydroquinate synthase of Actinobacillus pleuropneumoniae serotype 5b (strain L20).